Here is a 128-residue protein sequence, read N- to C-terminus: Con-Ins F2b (128 aa).

An N-terminal signal peptide occupies residues 1–24 (MTTSSYFLLVALGLLLYVCRSSFG). Cystine bridges form between cysteine 29–cysteine 104, cysteine 41–cysteine 107, cysteine 53–cysteine 120, and cysteine 106–cysteine 111. Positions 59 to 89 (LQGGTGKKRGRASLLRKRRAFLSMLKARAKR) are cleaved as a propeptide — c peptide. Glutamate 115 carries the post-translational modification 4-carboxyglutamate; partial. At serine 127 the chain carries Serine amide.

The protein belongs to the insulin family. In terms of assembly, heterodimer of A and B chains; disulfide-linked. As to expression, expressed by the venom gland.

The protein localises to the secreted. This venom insulin facilitates prey capture by rapidly inducing hypoglycemic shock. Intraperitoneal injection of this peptide into zebrafish lowers blood glucose with the same potency than human insulin. In vivo, when applied to water, this peptide reduces overall locomotor activity of zebrafish larvae, observed as a significant decrease in the percentage of time spent swimming and movement frequency. This chain is Con-Ins F2b, found in Conus floridulus (Cone snail).